Here is a 176-residue protein sequence, read N- to C-terminus: Ribosome maturation factor RimM (176 aa).

The 73-residue stretch at 100–172 (PDTYYDHQLV…IVEIDPPHGL (73 aa)) folds into the PRC barrel domain.

Belongs to the RimM family. Binds ribosomal protein uS19.

Its subcellular location is the cytoplasm. Functionally, an accessory protein needed during the final step in the assembly of 30S ribosomal subunit, possibly for assembly of the head region. Essential for efficient processing of 16S rRNA. May be needed both before and after RbfA during the maturation of 16S rRNA. It has affinity for free ribosomal 30S subunits but not for 70S ribosomes. The protein is Ribosome maturation factor RimM of Mycobacterium bovis (strain ATCC BAA-935 / AF2122/97).